The chain runs to 197 residues: Large ribosomal subunit protein bL25 (197 aa).

The protein belongs to the bacterial ribosomal protein bL25 family. CTC subfamily. Part of the 50S ribosomal subunit; part of the 5S rRNA/L5/L18/L25 subcomplex. Contacts the 5S rRNA. Binds to the 5S rRNA independently of L5 and L18.

In terms of biological role, this is one of the proteins that binds to the 5S RNA in the ribosome where it forms part of the central protuberance. This chain is Large ribosomal subunit protein bL25, found in Lawsonia intracellularis (strain PHE/MN1-00).